We begin with the raw amino-acid sequence, 264 residues long: Thymidylate synthase (264 aa).

Residue Arg21 participates in dUMP binding. His51 provides a ligand contact to (6R)-5,10-methylene-5,6,7,8-tetrahydrofolate. Arg126 to Arg127 contacts dUMP. Catalysis depends on Cys146, which acts as the Nucleophile. DUMP contacts are provided by residues Arg166 to Asp169, Asn177, and His207 to Tyr209. Asp169 contributes to the (6R)-5,10-methylene-5,6,7,8-tetrahydrofolate binding site. Ala263 contacts (6R)-5,10-methylene-5,6,7,8-tetrahydrofolate.

It belongs to the thymidylate synthase family. Bacterial-type ThyA subfamily. In terms of assembly, homodimer.

It is found in the cytoplasm. The enzyme catalyses dUMP + (6R)-5,10-methylene-5,6,7,8-tetrahydrofolate = 7,8-dihydrofolate + dTMP. The protein operates within pyrimidine metabolism; dTTP biosynthesis. Functionally, catalyzes the reductive methylation of 2'-deoxyuridine-5'-monophosphate (dUMP) to 2'-deoxythymidine-5'-monophosphate (dTMP) while utilizing 5,10-methylenetetrahydrofolate (mTHF) as the methyl donor and reductant in the reaction, yielding dihydrofolate (DHF) as a by-product. This enzymatic reaction provides an intracellular de novo source of dTMP, an essential precursor for DNA biosynthesis. The sequence is that of Thymidylate synthase from Porphyromonas gingivalis (strain ATCC BAA-308 / W83).